Reading from the N-terminus, the 972-residue chain is Glycine dehydrogenase (decarboxylating) (972 aa).

Lys713 is modified (N6-(pyridoxal phosphate)lysine).

Belongs to the GcvP family. In terms of assembly, the glycine cleavage system is composed of four proteins: P, T, L and H. The cofactor is pyridoxal 5'-phosphate.

It catalyses the reaction N(6)-[(R)-lipoyl]-L-lysyl-[glycine-cleavage complex H protein] + glycine + H(+) = N(6)-[(R)-S(8)-aminomethyldihydrolipoyl]-L-lysyl-[glycine-cleavage complex H protein] + CO2. The glycine cleavage system catalyzes the degradation of glycine. The P protein binds the alpha-amino group of glycine through its pyridoxal phosphate cofactor; CO(2) is released and the remaining methylamine moiety is then transferred to the lipoamide cofactor of the H protein. The polypeptide is Glycine dehydrogenase (decarboxylating) (Aromatoleum aromaticum (strain DSM 19018 / LMG 30748 / EbN1) (Azoarcus sp. (strain EbN1))).